The following is a 448-amino-acid chain: Tryptophan dimethylallyltransferase 1 (448 aa).

L-tryptophan contacts are provided by residues 80-81 and E89; that span reads IL. Substrate contacts are provided by R100, K186, and Y188. L-tryptophan contacts are provided by Y190 and R249. Positions 262, 264, 266, 348, 350, 414, and 418 each coordinate substrate.

The protein belongs to the tryptophan dimethylallyltransferase family. As to quaternary structure, homodimer.

It catalyses the reaction L-tryptophan + dimethylallyl diphosphate = 4-(3-methylbut-2-enyl)-L-tryptophan + diphosphate. It functions in the pathway alkaloid biosynthesis; ergot alkaloid biosynthesis. Tryptophan dimethylallyltransferase; part of the gene cluster that mediates the biosynthesis of fungal ergot alkaloid. DmaW catalyzes the first step of ergot alkaloid biosynthesis by condensing dimethylallyl diphosphate (DMAP) and tryptophan to form 4-dimethylallyl-L-tryptophan. The second step is catalyzed by the methyltransferase easF that methylates 4-dimethylallyl-L-tryptophan in the presence of S-adenosyl-L-methionine, resulting in the formation of 4-dimethylallyl-L-abrine. The catalase easC and the FAD-dependent oxidoreductase easE then transform 4-dimethylallyl-L-abrine to chanoclavine-I which is further oxidized by easD in the presence of NAD(+), resulting in the formation of chanoclavine-I aldehyde. Agroclavine dehydrogenase easG then mediates the conversion of chanoclavine-I aldehyde to agroclavine via a non-enzymatic adduct reaction: the substrate is an iminium intermediate that is formed spontaneously from chanoclavine-I aldehyde in the presence of glutathione. The presence of easA is not required to complete this reaction. Further conversion of agroclavine to paspalic acid is a two-step process involving oxidation of agroclavine to elymoclavine and of elymoclavine to paspalic acid, the second step being performed by the elymoclavine oxidase cloA. Paspalic acid is then further converted to D-lysergic acid. Ergopeptines are assembled from D-lysergic acid and three different amino acids by the D-lysergyl-peptide-synthetases composed each of a monomudular and a trimodular nonribosomal peptide synthetase subunit. LpsB and lpsC encode the monomodular subunits responsible for D-lysergic acid activation and incorporation into the ergopeptine backbone. LpsA1 and A2 subunits encode the trimodular nonribosomal peptide synthetase assembling the tripeptide portion of ergopeptines. LpsA1 is responsible for formation of the major ergopeptine, ergotamine, and lpsA2 for alpha-ergocryptine, the minor ergopeptine of the total alkaloid mixture elaborated by C.purpurea. D-lysergyl-tripeptides are assembled by the nonribosomal peptide synthetases and released as N-(D-lysergyl-aminoacyl)-lactams. Cyclolization of the D-lysergyl-tripeptides is performed by the Fe(2+)/2-ketoglutarate-dependent dioxygenase easH which introduces a hydroxyl group into N-(D-lysergyl-aminoacyl)-lactam at alpha-C of the aminoacyl residue followed by spontaneous condensation with the terminal lactam carbonyl group. This Claviceps purpurea (strain 20.1) (Ergot fungus) protein is Tryptophan dimethylallyltransferase 1.